A 25-amino-acid chain; its full sequence is M-poneritoxin-Ng1a (25 aa).

Expressed by the venom gland.

It is found in the secreted. The protein resides in the target cell membrane. Has a broad spectrum of activity against both Gram-positive and Gram-negative bacteria and S.cerevisiae. Has insecticidal and hemolytic activities. May act by disrupting the integrity of the bacterial cell membrane. The chain is M-poneritoxin-Ng1a from Neoponera goeldii (Ponerine ant).